The sequence spans 229 residues: MKVGIVGAMAQEVEILASLIENKNVVHIAGCTIYQGNIQDKEVALLQSGIGKVAAAMGTTLLLQMFKPDIVINTGSAGGVSSGLKVGDVVVSTQTVYHDADVTAFGYAKGQLPACPPAFISDPKLTALVANVAKQQGINLTSGLICSGDSFINSAEKLAWIKANFPEVVAIEMEATAIAQVCHKFNIPFVVIRAISDVGDGEASMSFEEFLPLAAKQSSSMVLKILQSL.

Glutamate 12 (proton acceptor) is an active-site residue. Substrate is bound by residues glycine 78, isoleucine 152, and 173–174; that span reads ME. The active-site Proton donor is the aspartate 197.

This sequence belongs to the PNP/UDP phosphorylase family. MtnN subfamily.

It catalyses the reaction S-adenosyl-L-homocysteine + H2O = S-(5-deoxy-D-ribos-5-yl)-L-homocysteine + adenine. The catalysed reaction is S-methyl-5'-thioadenosine + H2O = 5-(methylsulfanyl)-D-ribose + adenine. It carries out the reaction 5'-deoxyadenosine + H2O = 5-deoxy-D-ribose + adenine. The protein operates within amino-acid biosynthesis; L-methionine biosynthesis via salvage pathway; S-methyl-5-thio-alpha-D-ribose 1-phosphate from S-methyl-5'-thioadenosine (hydrolase route): step 1/2. Catalyzes the irreversible cleavage of the glycosidic bond in both 5'-methylthioadenosine (MTA) and S-adenosylhomocysteine (SAH/AdoHcy) to adenine and the corresponding thioribose, 5'-methylthioribose and S-ribosylhomocysteine, respectively. Also cleaves 5'-deoxyadenosine, a toxic by-product of radical S-adenosylmethionine (SAM) enzymes, into 5-deoxyribose and adenine. The sequence is that of 5'-methylthioadenosine/S-adenosylhomocysteine nucleosidase from Histophilus somni (strain 129Pt) (Haemophilus somnus).